A 113-amino-acid polypeptide reads, in one-letter code: Hemerythrin (113 aa).

Fe cation-binding residues include H25, H54, E58, H73, H77, H101, and D106.

Belongs to the hemerythrin family. As to quaternary structure, homooctamer.

Functionally, hemerythrin is a respiratory protein in blood cells of certain marine worms. The oxygen-binding site in each chain contains two iron atoms. This is Hemerythrin from Themiste dyscrita (Peanut worm).